Consider the following 262-residue polypeptide: Linker for activation of T-cells family member 1 (262 aa).

The Extracellular segment spans residues Met1–Ala4. Residues Ile5–Val27 form a helical; Signal-anchor for type III membrane protein membrane-spanning segment. S-palmitoyl cysteine attachment occurs at residues Cys26 and Cys29. Topologically, residues His28–Asn262 are cytoplasmic. Thr39 is modified (phosphothreonine). 7 positions are modified to phosphoserine: Ser40, Ser41, Ser43, Ser84, Ser101, Ser106, and Ser109. Positions Ser69–Ala115 are disordered. 5 positions are modified to phosphotyrosine: Tyr110, Tyr156, Tyr161, Tyr200, and Tyr220. Residues Tyr161–Val164 form an interaction with PLCG1 region. Interaction with GRB2, GRAP2 and PIK3R1 regions lie at residues Tyr200–Val203 and Tyr220–Val223. The tract at residues Ser206–Asn262 is disordered. 3 positions are modified to phosphoserine: Ser224, Ser240, and Ser241. The span at Glu243–Pro253 shows a compositional bias: acidic residues. Tyr255 is modified (phosphotyrosine).

When phosphorylated, interacts directly with the PIK3R1 subunit of phosphoinositide 3-kinase and the SH2 domains of GRB2, GRAP, GRAP2, PLCG1 and PLCG2. Interacts indirectly with CBL, SOS, VAV, and LCP2. Interacts with SHB, SKAP2 and CLNK. Interacts with FCGR1A. Interacts with GRB2, PLCG1 and THEMIS upon TCR activation in thymocytes. Interacts with THEMIS2. In terms of assembly, (Microbial infection) Interacts with herpes virus 1/HHV-1 protein US3; this interaction prevents the interaction between LAT and TRAF6. In terms of processing, phosphorylated on tyrosines by ZAP70 upon TCR activation, or by SYK upon other immunoreceptor activation; which leads to the recruitment of multiple signaling molecules. Is one of the most prominently tyrosine-phosphorylated proteins detected following TCR engagement. May be dephosphorylated by PTPRJ. Phosphorylated by ITK leading to the recruitment of VAV1 to LAT-containing complexes. Post-translationally, palmitoylation of Cys-26 and Cys-29 is required for raft targeting and efficient phosphorylation. 'Lys-63'-linked ubiquitinated by TRAF6. As to expression, expressed in thymus, T-cells, NK cells, mast cells and, at lower levels, in spleen. Present in T-cells but not B-cells (at protein level).

The protein localises to the cell membrane. Its function is as follows. Required for TCR (T-cell antigen receptor)- and pre-TCR-mediated signaling, both in mature T-cells and during their development. Involved in FCGR3 (low affinity immunoglobulin gamma Fc region receptor III)-mediated signaling in natural killer cells and FCER1 (high affinity immunoglobulin epsilon receptor)-mediated signaling in mast cells. Couples activation of these receptors and their associated kinases with distal intracellular events such as mobilization of intracellular calcium stores, PKC activation, MAPK activation or cytoskeletal reorganization through the recruitment of PLCG1, GRB2, GRAP2, and other signaling molecules. The chain is Linker for activation of T-cells family member 1 (LAT) from Homo sapiens (Human).